A 266-amino-acid chain; its full sequence is Imidazole glycerol phosphate synthase subunit HisF (266 aa).

Active-site residues include aspartate 11 and aspartate 130.

The protein belongs to the HisA/HisF family. In terms of assembly, heterodimer of HisH and HisF.

The protein localises to the cytoplasm. The enzyme catalyses 5-[(5-phospho-1-deoxy-D-ribulos-1-ylimino)methylamino]-1-(5-phospho-beta-D-ribosyl)imidazole-4-carboxamide + L-glutamine = D-erythro-1-(imidazol-4-yl)glycerol 3-phosphate + 5-amino-1-(5-phospho-beta-D-ribosyl)imidazole-4-carboxamide + L-glutamate + H(+). It functions in the pathway amino-acid biosynthesis; L-histidine biosynthesis; L-histidine from 5-phospho-alpha-D-ribose 1-diphosphate: step 5/9. Its function is as follows. IGPS catalyzes the conversion of PRFAR and glutamine to IGP, AICAR and glutamate. The HisF subunit catalyzes the cyclization activity that produces IGP and AICAR from PRFAR using the ammonia provided by the HisH subunit. The protein is Imidazole glycerol phosphate synthase subunit HisF of Verminephrobacter eiseniae (strain EF01-2).